A 739-amino-acid chain; its full sequence is MSIWGVRCLTQRFIRQAYILANRRLLGPVPQRSPPAYAPLRPAHSSLYQMVKKRTLEARTKLQANKYPNHQVCVTKPSTTPPVEEYETAVEGAGVPAYANAQFQAHSQSEPLFKVGFADVKSVCSAKDVLKSDSAKLSTSQPVLDSCKATSPCEEFKRKRKETTCQPCDEDGTAPGGGDGGDEECECRMKDLRLKCLLGALAALLAGGFLAWFMTRDTDDSEAKKAEAEEEERKRRLVAGLATSPPSSEDLPKHVPYLIIGGGTAAFSAFRAIKSNDATAKVLMISNEFRKPYMRPPLSKELWYTPNPNEDPIKDYRFKQWTGSERSLFFEPDEFFIDPEDLDDNANGGIAVAQGFSVKKVDAQKRIVTLNDGYEISYDECLIATGCAPKNLPMLRDAPPSVLEKVMVYRTPDDFDRLRKLAAEKRSITIVGNGFIGSELACSLAHYSRENNGGKVYQVFQENANMSKVLPNYLSRWTTAKMEAQGVCVIPNASIRSAVRDETNLKLELNNGMTLMSDVVVVCVGCTPNTDLAGPSRLEVDRSLGGFVVNAELEARRNLYVAGDASCFFDPLLGRRRVEHHDHSVVSGRLAGENMTGAKKPYQHQSMFWSDLGPEIGYEGIGLVDSSLPTVGVFALPSESATRVDQLSESSDSDVPETSTSSSQSSKSDAGASQDGVTCDPDEAGNYGKGVIFYLKNDKIVGILLWNLFNRIGLARTIINQNKKYDDLNEVAKLFEIHA.

A mitochondrion-targeting transit peptide spans 1–42 (MSIWGVRCLTQRFIRQAYILANRRLLGPVPQRSPPAYAPLRP). The segment at 257 to 564 (YLIIGGGTAA…ARRNLYVAGD (308 aa)) is FAD-dependent oxidoreductase. FAD-binding positions include 261-265 (GGGTA), Arg295, Lys300, Val358, Arg410, Asp564, and 580-581 (HH). Residues 644–681 (VDQLSESSDSDVPETSTSSSQSSKSDAGASQDGVTCDP) are disordered. Residues 656 to 676 (PETSTSSSQSSKSDAGASQDG) show a composition bias toward low complexity.

Belongs to the FAD-dependent oxidoreductase family. It depends on FAD as a cofactor.

It localises to the mitochondrion intermembrane space. It carries out the reaction A + NADH + H(+) = AH2 + NAD(+). In terms of biological role, probable NADH oxidoreductase. Mitochondrial effector of cell death that plays roles in developmentally regulated cell death and normal mitochondrial function. In Drosophila melanogaster (Fruit fly), this protein is Putative apoptosis-inducing factor 1, mitochondrial (AIF).